Here is a 295-residue protein sequence, read N- to C-terminus: Ribosome production factor 1 (295 aa).

Residues 24 to 47 are disordered; it reads HEKNKERHTMRRKRAKEERENPEL. Over residues 38–47 the composition is skewed to basic and acidic residues; that stretch reads AKEERENPEL. The Brix domain maps to 93–276; sequence PKIFLTTNVN…LKRLQRGIKE (184 aa). An RNA-binding region spans residues 254 to 271; that stretch reads VGLQELGPQFTLKLKRLQ.

In terms of assembly, part of a complex that includes BRX1, RPF1, RPF2 and SSF1 or SSF2.

It localises to the nucleus. The protein resides in the nucleolus. Functionally, essential protein. Required for biogenesis of the 60S ribosomal subunit. The sequence is that of Ribosome production factor 1 (RPF1) from Saccharomyces cerevisiae (strain ATCC 204508 / S288c) (Baker's yeast).